The following is a 527-amino-acid chain: Amine oxidase [flavin-containing] A (527 aa).

Met-1 is modified (N-acetylmethionine). Over 1-497 (MERQEKANNA…RTFWERNLPS (497 aa)) the chain is Cytoplasmic. Position 383 is a phosphoserine (Ser-383). Cys-406 is subject to S-8alpha-FAD cysteine. A helical; Anchor for type IV membrane protein membrane pass occupies residues 498-518 (VTGLLKIIGFSTSVTALWLAV). Over 519 to 527 (YKFRLLTRS) the chain is Mitochondrial intermembrane. Residues 520-522 (KFR) are interaction with membrane phospholipid headgroups.

The protein belongs to the flavin monoamine oxidase family. In terms of assembly, monomer, homo- or heterodimer (containing two subunits of similar size). Each subunit contains a covalently bound flavin. Enzymatically active as monomer. FAD serves as cofactor.

The protein resides in the mitochondrion outer membrane. It catalyses the reaction a secondary aliphatic amine + O2 + H2O = a primary amine + an aldehyde + H2O2. The enzyme catalyses a primary methyl amine + O2 + H2O = an aldehyde + H2O2 + NH4(+). The catalysed reaction is (R)-adrenaline + O2 + H2O = (R)-3,4-dihydroxymandelaldehyde + methylamine + H2O2. It carries out the reaction dopamine + O2 + H2O = 3,4-dihydroxyphenylacetaldehyde + H2O2 + NH4(+). It catalyses the reaction tyramine + O2 + H2O = (4-hydroxyphenyl)acetaldehyde + H2O2 + NH4(+). The enzyme catalyses (R)-noradrenaline + O2 + H2O = (R)-3,4-dihydroxymandelaldehyde + H2O2 + NH4(+). The catalysed reaction is serotonin + O2 + H2O = (5-hydroxyindol-3-yl)acetaldehyde + H2O2 + NH4(+). It carries out the reaction kynuramine + O2 + H2O = 3-(2-aminophenyl)-3-oxopropanal + H2O2 + NH4(+). It catalyses the reaction tryptamine + O2 + H2O = indole-3-acetaldehyde + H2O2 + NH4(+). The enzyme catalyses 2-phenylethylamine + O2 + H2O = 2-phenylacetaldehyde + H2O2 + NH4(+). Functionally, catalyzes the oxidative deamination of primary and some secondary amine such as neurotransmitters, with concomitant reduction of oxygen to hydrogen peroxide and has important functions in the metabolism of neuroactive and vasoactive amines in the central nervous system and peripheral tissues. Preferentially oxidizes serotonin. Also catalyzes the oxidative deamination of kynuramine to 3-(2-aminophenyl)-3-oxopropanal that can spontaneously condense to 4-hydroxyquinoline. The protein is Amine oxidase [flavin-containing] A of Sus scrofa (Pig).